Here is a 359-residue protein sequence, read N- to C-terminus: DNA replication and repair protein RecF (359 aa).

Residue 30–37 (GPNGSGKT) participates in ATP binding.

Belongs to the RecF family.

Its subcellular location is the cytoplasm. The RecF protein is involved in DNA metabolism; it is required for DNA replication and normal SOS inducibility. RecF binds preferentially to single-stranded, linear DNA. It also seems to bind ATP. The protein is DNA replication and repair protein RecF of Vibrio parahaemolyticus serotype O3:K6 (strain RIMD 2210633).